Reading from the N-terminus, the 266-residue chain is Apolipoprotein A-I (266 aa).

The first 18 residues, 1-18, serve as a signal peptide directing secretion; sequence MKAVVLTLAVLFLTGSQA. 2 repeat units span residues 67 to 88 and 89 to 110. Residues 67–266 are 10 X approximate tandem repeats; sequence LKLLDNWDSL…EEASKKLNAQ (200 aa). A Methionine sulfoxide modification is found at Met-109. Residues 111–121 form a 3; half-length repeat; that stretch reads KDVEEMKTKVQ. A run of 5 repeats spans residues 122–143, 144–165, 166–187, 188–209, and 210–231. Residues 232–242 form a 9; half-length repeat; sequence PALEDLRQGLL. Repeat 10 spans residues 243 to 266; sequence PVLESFKVSLLSALEEASKKLNAQ.

The protein belongs to the apolipoprotein A1/A4/E family. Homodimer. Interacts with APOA1BP and CLU. Component of a sperm activating protein complex (SPAP), consisting of APOA1, an immunoglobulin heavy chain, an immunoglobulin light chain and albumin. Interacts with NDRG1. Interacts with SCGB3A2. Interacts with NAXE and YJEFN3. In terms of processing, glycosylated. Palmitoylated. Post-translationally, phosphorylation sites are present in the extracellular medium. In terms of tissue distribution, major protein of plasma HDL, also found in chylomicrons.

The protein resides in the secreted. In terms of biological role, participates in the reverse transport of cholesterol from tissues to the liver for excretion by promoting cholesterol efflux from tissues and by acting as a cofactor for the lecithin cholesterol acyltransferase (LCAT). As part of the SPAP complex, activates spermatozoa motility. This chain is Apolipoprotein A-I (APOA1), found in Carlito syrichta (Philippine tarsier).